A 244-amino-acid polypeptide reads, in one-letter code: Isoprenyl transferase (244 aa).

D23 is a catalytic residue. Residue D23 coordinates Mg(2+). Substrate contacts are provided by residues 24-27 (GNGR), W28, R36, H40, and 68-70 (STE). N71 (proton acceptor) is an active-site residue. Substrate is bound by residues W72, R74, R191, and 197-199 (RMS). E210 contributes to the Mg(2+) binding site.

It belongs to the UPP synthase family. As to quaternary structure, homodimer. The cofactor is Mg(2+).

In terms of biological role, catalyzes the condensation of isopentenyl diphosphate (IPP) with allylic pyrophosphates generating different type of terpenoids. The sequence is that of Isoprenyl transferase from Lactococcus lactis subsp. lactis (strain IL1403) (Streptococcus lactis).